A 354-amino-acid chain; its full sequence is Protein RecA (354 aa).

67–74 (GPESSGKT) lines the ATP pocket.

This sequence belongs to the RecA family.

It localises to the cytoplasm. In terms of biological role, can catalyze the hydrolysis of ATP in the presence of single-stranded DNA, the ATP-dependent uptake of single-stranded DNA by duplex DNA, and the ATP-dependent hybridization of homologous single-stranded DNAs. It interacts with LexA causing its activation and leading to its autocatalytic cleavage. This is Protein RecA from Yersinia enterocolitica serotype O:8 / biotype 1B (strain NCTC 13174 / 8081).